Consider the following 177-residue polypeptide: Ferritin heavy chain, oocyte isoform (177 aa).

The 150-residue stretch at 7–156 (QNFHQECEAA…DHITNLRRMG (150 aa)) folds into the Ferritin-like diiron domain. Positions 24, 59, 62, 104, and 138 each coordinate Fe cation.

It belongs to the ferritin family. In terms of assembly, oligomer of 24 subunits. There are two types of subunits: L (light) chain and H (heavy) chain. The functional molecule is roughly spherical and contains a central cavity into which the insoluble mineral iron core is deposited.

It is found in the cytoplasm. The catalysed reaction is 4 Fe(2+) + O2 + 4 H(+) = 4 Fe(3+) + 2 H2O. Functionally, stores iron in a soluble, non-toxic, readily available form. Important for iron homeostasis. Has ferroxidase activity. Iron is taken up in the ferrous form and deposited as ferric hydroxides after oxidation. The sequence is that of Ferritin heavy chain, oocyte isoform from Xenopus laevis (African clawed frog).